We begin with the raw amino-acid sequence, 594 residues long: Capsid vertex component 1 (594 aa).

Disordered regions lie at residues 52-77 (GRSTGRAPGGDEDDAPASDDAEDAVG), 176-205 (NKRDRQHQLATTTNHRRRGGLRNNLDNGSD), 443-468 (ARRQRERSAPKPQELLFGPRNESGPP), and 575-594 (GRQEPETPRVSGRRLPFDDL). Residues 61 to 76 (GDEDDAPASDDAEDAV) are compositionally biased toward acidic residues.

The protein belongs to the herpesviridae CVC1 protein family. In terms of assembly, interacts (via C-terminus) with capsid vertex component 2/CVC2.

The protein localises to the virion. It is found in the host nucleus. Capsid vertex-specific component that plays a role during viral DNA encapsidation, assuring correct genome cleavage and presumably stabilizing capsids that contain full-length viral genomes. The polypeptide is Capsid vertex component 1 (Homo sapiens (Human)).